A 246-amino-acid chain; its full sequence is UDP-N-acetyl-D-mannosaminuronic acid transferase (246 aa).

It belongs to the glycosyltransferase 26 family.

It catalyses the reaction UDP-N-acetyl-alpha-D-mannosaminouronate + N-acetyl-alpha-D-glucosaminyl-di-trans,octa-cis-undecaprenyl diphosphate = beta-D-ManNAcA-(1-&gt;4)-alpha-D-GlcNAc-di-trans,octa-cis-undecaprenyl diphosphate + UDP + H(+). The protein operates within bacterial outer membrane biogenesis; enterobacterial common antigen biosynthesis. Its function is as follows. Catalyzes the synthesis of Und-PP-GlcNAc-ManNAcA (Lipid II), the second lipid-linked intermediate involved in enterobacterial common antigen (ECA) synthesis. The polypeptide is UDP-N-acetyl-D-mannosaminuronic acid transferase (Salmonella choleraesuis (strain SC-B67)).